We begin with the raw amino-acid sequence, 454 residues long: Bifunctional protein GlmU (454 aa).

The pyrophosphorylase stretch occupies residues 1–226 (MALNVVILAA…AIEVEGANNR (226 aa)). UDP-N-acetyl-alpha-D-glucosamine-binding positions include 8–11 (LAAG), Lys22, Gln73, 78–79 (GT), 100–102 (YGD), Gly137, Glu151, Asn166, and Asn224. Asp102 lines the Mg(2+) pocket. Residue Asn224 participates in Mg(2+) binding. The segment at 227-247 (VQLAQLERAYQAREAEKLMIA) is linker. Residues 248–454 (GANLRDPSRI…GWQRPVKIKK (207 aa)) form an N-acetyltransferase region. Arg330 and Lys348 together coordinate UDP-N-acetyl-alpha-D-glucosamine. Residue His360 is the Proton acceptor of the active site. UDP-N-acetyl-alpha-D-glucosamine-binding residues include Tyr363 and Asn374. Acetyl-CoA contacts are provided by residues Ala377, 383–384 (NY), Ser402, Ala420, and Arg437.

It in the N-terminal section; belongs to the N-acetylglucosamine-1-phosphate uridyltransferase family. In the C-terminal section; belongs to the transferase hexapeptide repeat family. Homotrimer. The cofactor is Mg(2+).

The protein localises to the cytoplasm. It carries out the reaction alpha-D-glucosamine 1-phosphate + acetyl-CoA = N-acetyl-alpha-D-glucosamine 1-phosphate + CoA + H(+). It catalyses the reaction N-acetyl-alpha-D-glucosamine 1-phosphate + UTP + H(+) = UDP-N-acetyl-alpha-D-glucosamine + diphosphate. It participates in nucleotide-sugar biosynthesis; UDP-N-acetyl-alpha-D-glucosamine biosynthesis; N-acetyl-alpha-D-glucosamine 1-phosphate from alpha-D-glucosamine 6-phosphate (route II): step 2/2. Its pathway is nucleotide-sugar biosynthesis; UDP-N-acetyl-alpha-D-glucosamine biosynthesis; UDP-N-acetyl-alpha-D-glucosamine from N-acetyl-alpha-D-glucosamine 1-phosphate: step 1/1. It functions in the pathway bacterial outer membrane biogenesis; LPS lipid A biosynthesis. Catalyzes the last two sequential reactions in the de novo biosynthetic pathway for UDP-N-acetylglucosamine (UDP-GlcNAc). The C-terminal domain catalyzes the transfer of acetyl group from acetyl coenzyme A to glucosamine-1-phosphate (GlcN-1-P) to produce N-acetylglucosamine-1-phosphate (GlcNAc-1-P), which is converted into UDP-GlcNAc by the transfer of uridine 5-monophosphate (from uridine 5-triphosphate), a reaction catalyzed by the N-terminal domain. The protein is Bifunctional protein GlmU of Shewanella sp. (strain ANA-3).